The sequence spans 194 residues: Kallikrein-like enzyme LV-Ka (194 aa).

Intrachain disulfides connect Cys-7-Cys-99, Cys-44-Cys-192, Cys-78-Cys-146, Cys-110-Cys-125, and Cys-136-Cys-161. One can recognise a Peptidase S1 domain in the interval 36 to 185 (LNQEDKFICP…YTEWIQSIIA (150 aa)). Ser-140 acts as the Charge relay system in catalysis.

Belongs to the peptidase S1 family. Snake venom subfamily. Monomer. Post-translationally, N-glycosylated. Expressed by the venom gland.

The protein resides in the secreted. With respect to regulation, completely inhibited by the serine protease inhibitors NPGB and PMSF, partially inhibited by benzamidines, and weakly or not inhibited by SBTI and EDTA. Its function is as follows. Shows kallikrein-like activity, releasing bradykinin from kininogen. Also activates plasminogen, which is also a plasma kallikrein activity. Is active upon the kallikrein substrates S-2266 and S-2302, suggesting a preference for Arg in P1 position. In vivo, lowers blood pressure after intravenous injection in rat. The protein is Kallikrein-like enzyme LV-Ka of Lachesis muta muta (Bushmaster).